The following is a 540-amino-acid chain: Glucose-6-phosphate isomerase (540 aa).

Catalysis depends on Glu346, which acts as the Proton donor. Catalysis depends on residues His377 and Lys505.

The protein belongs to the GPI family.

The protein resides in the cytoplasm. The enzyme catalyses alpha-D-glucose 6-phosphate = beta-D-fructose 6-phosphate. Its pathway is carbohydrate biosynthesis; gluconeogenesis. The protein operates within carbohydrate degradation; glycolysis; D-glyceraldehyde 3-phosphate and glycerone phosphate from D-glucose: step 2/4. Catalyzes the reversible isomerization of glucose-6-phosphate to fructose-6-phosphate. The polypeptide is Glucose-6-phosphate isomerase (Francisella tularensis subsp. tularensis (strain WY96-3418)).